Consider the following 480-residue polypeptide: Argininosuccinate lyase (480 aa).

This sequence belongs to the lyase 1 family. Argininosuccinate lyase subfamily.

It localises to the cytoplasm. It carries out the reaction 2-(N(omega)-L-arginino)succinate = fumarate + L-arginine. It participates in amino-acid biosynthesis; L-arginine biosynthesis; L-arginine from L-ornithine and carbamoyl phosphate: step 3/3. This is Argininosuccinate lyase from Ruthia magnifica subsp. Calyptogena magnifica.